A 736-amino-acid polypeptide reads, in one-letter code: Polyribonucleotide nucleotidyltransferase (736 aa).

Positions 493 and 499 each coordinate Mg(2+). Residues 560–619 (PQHAELVVNPDAIRMIIGPGGKNIKQITTVTGAAIDINDSGKISIFAPTSEAMEQAKQMI) form the KH domain. The region spanning 629–703 (GKNYKGKVRK…SRKAVLLEEE (75 aa)) is the S1 motif domain. The segment at 710 to 736 (EESSRFSKGNRNGDRSRHNNRERTRRT) is disordered. The segment covering 720–736 (RNGDRSRHNNRERTRRT) has biased composition (basic and acidic residues).

The protein belongs to the polyribonucleotide nucleotidyltransferase family. Requires Mg(2+) as cofactor.

The protein resides in the cytoplasm. It catalyses the reaction RNA(n+1) + phosphate = RNA(n) + a ribonucleoside 5'-diphosphate. In terms of biological role, involved in mRNA degradation. Catalyzes the phosphorolysis of single-stranded polyribonucleotides processively in the 3'- to 5'-direction. In Lawsonia intracellularis (strain PHE/MN1-00), this protein is Polyribonucleotide nucleotidyltransferase.